The sequence spans 279 residues: Energy-coupling factor transporter ATP-binding protein EcfA1 (279 aa).

One can recognise an ABC transporter domain in the interval 6-240 (LSIEGVSFRY…GSKLERIGLD (235 aa)). ATP is bound at residue 40–47 (GHNGSGKS).

Belongs to the ABC transporter superfamily. Energy-coupling factor EcfA family. As to quaternary structure, forms a stable energy-coupling factor (ECF) transporter complex composed of 2 membrane-embedded substrate-binding proteins (S component), 2 ATP-binding proteins (A component) and 2 transmembrane proteins (T component).

The protein localises to the cell membrane. Functionally, ATP-binding (A) component of a common energy-coupling factor (ECF) ABC-transporter complex. Unlike classic ABC transporters this ECF transporter provides the energy necessary to transport a number of different substrates. The protein is Energy-coupling factor transporter ATP-binding protein EcfA1 of Geobacillus kaustophilus (strain HTA426).